The chain runs to 393 residues: Protein TsgA (393 aa).

12 helical membrane-spanning segments follow: residues 11-31 (WISF…GMVM), 51-71 (FLNA…EIVP), 78-98 (FGFI…SLAL), 101-121 (AAMF…TFLI), 134-154 (LLFT…VAAF), 162-182 (WYWV…LTFG), 206-226 (IGVL…LGFI), 245-265 (ALVS…SFIL), 273-293 (ILTV…TGTQ), 298-318 (WFIL…ITLG), 332-352 (FILT…GPIV), and 361-381 (LLTA…LGFV).

This sequence belongs to the major facilitator superfamily. TsgA family.

It localises to the cell inner membrane. This Salmonella dublin (strain CT_02021853) protein is Protein TsgA.